Here is a 464-residue protein sequence, read N- to C-terminus: ATP synthase subunit beta (464 aa).

153 to 160 (GGAGVGKT) lines the ATP pocket.

It belongs to the ATPase alpha/beta chains family. F-type ATPases have 2 components, CF(1) - the catalytic core - and CF(0) - the membrane proton channel. CF(1) has five subunits: alpha(3), beta(3), gamma(1), delta(1), epsilon(1). CF(0) has three main subunits: a(1), b(2) and c(9-12). The alpha and beta chains form an alternating ring which encloses part of the gamma chain. CF(1) is attached to CF(0) by a central stalk formed by the gamma and epsilon chains, while a peripheral stalk is formed by the delta and b chains.

It localises to the cell inner membrane. The enzyme catalyses ATP + H2O + 4 H(+)(in) = ADP + phosphate + 5 H(+)(out). Functionally, produces ATP from ADP in the presence of a proton gradient across the membrane. The catalytic sites are hosted primarily by the beta subunits. This chain is ATP synthase subunit beta, found in Burkholderia cenocepacia (strain ATCC BAA-245 / DSM 16553 / LMG 16656 / NCTC 13227 / J2315 / CF5610) (Burkholderia cepacia (strain J2315)).